Here is a 1153-residue protein sequence, read N- to C-terminus: Error-prone DNA polymerase (1153 aa).

The interval 1107–1153 (DELIAPSASTEREAPLNDDRRDHPDLPAQQIRHPRNVRILPPSRDFH) is disordered. Residues 1116–1131 (TEREAPLNDDRRDHPD) are compositionally biased toward basic and acidic residues.

This sequence belongs to the DNA polymerase type-C family. DnaE2 subfamily.

It is found in the cytoplasm. The catalysed reaction is DNA(n) + a 2'-deoxyribonucleoside 5'-triphosphate = DNA(n+1) + diphosphate. DNA polymerase involved in damage-induced mutagenesis and translesion synthesis (TLS). It is not the major replicative DNA polymerase. The protein is Error-prone DNA polymerase of Rhodopseudomonas palustris (strain BisA53).